Here is a 446-residue protein sequence, read N- to C-terminus: MLHPETSPGRGHLLAVLLALLGTAWAEVWPPQLQEQAPMAGALNRKESFLLLSLHNRLRSWVQPPAADMRRLDWSDSLAQLAQARAALCGIPTPSLASGLWRTLQVGWNMQLLPAGLASFVEVVSLWFAEGQRYSHAAGECARNATCTHYTQLVWATSSQLGCGRHLCSAGQAAIEAFVCAYSPRGNWEVNGKTIVPYKKGAWCSLCTASVSGCFKAWDHAGGLCEVPRNPCRMSCQNHGRLNISTCHCHCPPGYTGRYCQVRCSLQCVHGRFREEECSCVCDIGYGGAQCATKVHFPFHTCDLRIDGDCFMVSSEADTYYRARMKCQRKGGVLAQIKSQKVQDILAFYLGRLETTNEVIDSDFETRNFWIGLTYKTAKDSFRWATGEHQAFTSFAFGQPDNHGFGNCVELQASAAFNWNNQRCKTRNRYICQFAQEHISRWGPGS.

Residues 1–26 (MLHPETSPGRGHLLAVLLALLGTAWA) form the signal peptide. An SCP domain is found at 52–182 (LSLHNRLRSW…AAIEAFVCAY (131 aa)). Residue Asn-144 is glycosylated (N-linked (GlcNAc...) asparagine). One can recognise an EGF-like domain in the interval 228–261 (PRNPCRMSCQNHGRLNISTCHCHCPPGYTGRYCQ). 4 cysteine pairs are disulfide-bonded: Cys-236/Cys-249, Cys-251/Cys-260, Cys-327/Cys-432, and Cys-408/Cys-424. The C-type lectin domain occupies 306-433 (IDGDCFMVSS…CKTRNRYICQ (128 aa)).

As to expression, detected in peripheral blood cells.

It localises to the secreted. The protein localises to the endoplasmic reticulum. It is found in the golgi apparatus. The protein resides in the endosome. Its function is as follows. Binds polysaccharidesin a Ca(2+)-independent manner with a preferentially binding to fucoidan, beta-glucans and galactans. The polypeptide is C-type lectin domain family 18 member C (CLEC18C) (Homo sapiens (Human)).